The following is a 512-amino-acid chain: Cobyric acid synthase (512 aa).

Positions 254–455 (EIDIAVVKLP…LHGLFDNKAL (202 aa)) constitute a GATase cobBQ-type domain. Residue cysteine 335 is the Nucleophile of the active site. Residue histidine 447 is part of the active site.

Belongs to the CobB/CobQ family. CobQ subfamily.

It functions in the pathway cofactor biosynthesis; adenosylcobalamin biosynthesis. In terms of biological role, catalyzes amidations at positions B, D, E, and G on adenosylcobyrinic A,C-diamide. NH(2) groups are provided by glutamine, and one molecule of ATP is hydrogenolyzed for each amidation. The chain is Cobyric acid synthase from Desulforamulus reducens (strain ATCC BAA-1160 / DSM 100696 / MI-1) (Desulfotomaculum reducens).